The primary structure comprises 697 residues: Elongation factor G 1 (697 aa).

The 276-residue stretch at 8–283 folds into the tr-type G domain; it reads ERYRNFGIMA…AVVDFLPSPV (276 aa). GTP-binding positions include 17 to 24, 81 to 85, and 135 to 138; these read AHIDAGKT, DTPGH, and NKMD.

It belongs to the TRAFAC class translation factor GTPase superfamily. Classic translation factor GTPase family. EF-G/EF-2 subfamily.

The protein localises to the cytoplasm. In terms of biological role, catalyzes the GTP-dependent ribosomal translocation step during translation elongation. During this step, the ribosome changes from the pre-translocational (PRE) to the post-translocational (POST) state as the newly formed A-site-bound peptidyl-tRNA and P-site-bound deacylated tRNA move to the P and E sites, respectively. Catalyzes the coordinated movement of the two tRNA molecules, the mRNA and conformational changes in the ribosome. The sequence is that of Elongation factor G 1 from Anaeromyxobacter dehalogenans (strain 2CP-C).